The primary structure comprises 299 residues: Porphobilinogen deaminase (299 aa).

Cys-242 carries the S-(dipyrrolylmethanemethyl)cysteine modification.

This sequence belongs to the HMBS family. In terms of assembly, monomer. The cofactor is dipyrromethane.

It catalyses the reaction 4 porphobilinogen + H2O = hydroxymethylbilane + 4 NH4(+). It functions in the pathway porphyrin-containing compound metabolism; protoporphyrin-IX biosynthesis; coproporphyrinogen-III from 5-aminolevulinate: step 2/4. Functionally, tetrapolymerization of the monopyrrole PBG into the hydroxymethylbilane pre-uroporphyrinogen in several discrete steps. The chain is Porphobilinogen deaminase from Rickettsia typhi (strain ATCC VR-144 / Wilmington).